We begin with the raw amino-acid sequence, 291 residues long: NADH-cytochrome b5 reductase 2 (291 aa).

Residues 7–23 (PIAATSVVAAAASSYYF) form a helical membrane-spanning segment. Residues 41–145 (DQWVDLKLKS…KGPIIKYQWQ (105 aa)) enclose the FAD-binding FR-type domain. 148–183 (LHKEITLIGAGTGITPLYQLISAINKNPEDKTKVNL) serves as a coordination point for FAD.

Belongs to the flavoprotein pyridine nucleotide cytochrome reductase family. FAD is required as a cofactor.

Its subcellular location is the mitochondrion outer membrane. It carries out the reaction 2 Fe(III)-[cytochrome b5] + NADH = 2 Fe(II)-[cytochrome b5] + NAD(+) + H(+). Functionally, may mediate the reduction of outer membrane cytochrome b5. The chain is NADH-cytochrome b5 reductase 2 (MCR1) from Yarrowia lipolytica (strain CLIB 122 / E 150) (Yeast).